A 325-amino-acid polypeptide reads, in one-letter code: MAATVRCFGRVLIHHQRCSLATVTSQTSLYPCCIYVPVPNRHFAAAAKPAKKTKKGTKEKASNEKKDDIEKIKSYPFMEGEPEDDVYLKRLYPRQIYEVEKAVNLLKKFQVLDFTNPKQGVYLDLTLDMTLGKKKKVEPFASVLSLPYPFISEMSKVAVFTGNASEIKIAEENGAAFAGGTNLIQKILDDEIQADFYIAVPEIMPELNPLRKKLKTRFPKFNRNSVGRDIPKMLELFKTGLEIKVDEERENFLETKIATLDMPSDQIAANLQAVINEVCRQRPLNLGPFVVRAFLRSSTSEGLLLKIEPLLPKEGETKESDKKAV.

The transit peptide at 1 to 50 directs the protein to the mitochondrion; sequence MAATVRCFGRVLIHHQRCSLATVTSQTSLYPCCIYVPVPNRHFAAAAKPA. The tract at residues 47–66 is disordered; sequence AKPAKKTKKGTKEKASNEKK. Positions 56 to 66 are enriched in basic and acidic residues; sequence GTKEKASNEKK.

The protein belongs to the universal ribosomal protein uL1 family.

It localises to the mitochondrion. The protein is Large ribosomal subunit protein uL1m (MRPL1) of Bos taurus (Bovine).